A 185-amino-acid chain; its full sequence is Ribose 1,5-bisphosphate phosphokinase PhnN (185 aa).

10 to 17 (GPSGSGKD) is an ATP binding site.

The protein belongs to the ribose 1,5-bisphosphokinase family.

The enzyme catalyses alpha-D-ribose 1,5-bisphosphate + ATP = 5-phospho-alpha-D-ribose 1-diphosphate + ADP. Its pathway is metabolic intermediate biosynthesis; 5-phospho-alpha-D-ribose 1-diphosphate biosynthesis; 5-phospho-alpha-D-ribose 1-diphosphate from D-ribose 5-phosphate (route II): step 3/3. Its function is as follows. Catalyzes the phosphorylation of ribose 1,5-bisphosphate to 5-phospho-D-ribosyl alpha-1-diphosphate (PRPP). This Shigella dysenteriae serotype 1 (strain Sd197) protein is Ribose 1,5-bisphosphate phosphokinase PhnN.